Reading from the N-terminus, the 349-residue chain is Protein RecA (349 aa).

65 to 72 (GPESSGKT) is an ATP binding site.

It belongs to the RecA family.

It is found in the cytoplasm. Its function is as follows. Can catalyze the hydrolysis of ATP in the presence of single-stranded DNA, the ATP-dependent uptake of single-stranded DNA by duplex DNA, and the ATP-dependent hybridization of homologous single-stranded DNAs. It interacts with LexA causing its activation and leading to its autocatalytic cleavage. The chain is Protein RecA from Azotobacter vinelandii.